A 214-amino-acid chain; its full sequence is Rac-like GTP-binding protein 2 (214 aa).

Residue 14-21 (GDGAVGKT) participates in GTP binding. Residues 36–44 (YIPTVFDNF) carry the Effector region motif. Residues 61-65 (DTAGQ) and 119-122 (TKLD) each bind GTP.

This sequence belongs to the small GTPase superfamily. Rho family. May be palmitoylated.

Its subcellular location is the cytoplasm. It localises to the membrane. Its function is as follows. Inactive GDP-bound Rho GTPases reside in the cytosol, are found in a complex with Rho GDP-dissociation inhibitors (Rho GDIs), and are released from the GDI protein in order to translocate to membranes upon activation. This chain is Rac-like GTP-binding protein 2 (RAC2), found in Oryza sativa subsp. japonica (Rice).